Here is a 147-residue protein sequence, read N- to C-terminus: uncharacterized protein (147 aa).

Residues 1 to 59 enclose the Response regulatory domain; that stretch reads MGAELVKWVKSHKIDAHIITFVAKMPYIDSIKLLEAGAKGCVWKTSHPAKLNRAIDSIS. The HTH luxR-type domain occupies 78–143; that stretch reads RYSSDNQLTN…ELIKTALRMG (66 aa). Residues 102 to 121 constitute a DNA-binding region (H-T-H motif); that stretch reads NKEIANFLQLSRKTVETHRL.

Post-translationally, overexpressed protein is phosphorylated in vitro by non-cognate histidine kinases BarA and UhpB.

This is an uncharacterized protein from Escherichia coli (strain K12).